The sequence spans 469 residues: Protein RUFY3 (469 aa).

Phosphothreonine is present on residues T5 and T12. S34 and S49 each carry phosphoserine. T51 is subject to Phosphothreonine. Residues 95-227 (DSDYAPLQQF…IDANFCMKGE (133 aa)) enclose the RUN domain. Coiled-coil stretches lie at residues 271–362 (NRHL…VEKE) and 422–463 (KSEL…AANK).

As to quaternary structure, interacts with PAK1. Interacts (via C-terminus) with Ras-related Rab-5 proteins. Interacts (via C-terminus) with Ras-related Rap-2 proteins. Interacts with PIK3CA and PIK3R1. Interacts (via N-terminus) with FSCN1; this interaction induces neuron axon development. Interacts with DBN1. Interacts (via the second coiled coil) with GTP-, but not GDP-bound ARL8A and ARL8B. Interacts with dynactin/DCTN1 and the dynein intermediate chain DYNC1I1/2. Directly interacts with DYNC1LI1. Phosphorylated by PAK1.

It is found in the cytoplasm. Its subcellular location is the endomembrane system. The protein resides in the cell projection. The protein localises to the invadopodium. It localises to the growth cone. It is found in the perikaryon. Its subcellular location is the filopodium. The protein resides in the lamellipodium. The protein localises to the lysosome. ARL8 effector that promotes the coupling of endolysosomes to dynein-dynactin for retrograde transport along microtubules. Acts by binding both GTP-bound ARL8 and dynein-dynactin. In nonneuronal cells, promotes concentration of endolysosomes in the juxtanuclear area. In hippocampal neurons, drives retrograde transport of endolysosomes from the axon to the soma. Plays a role in the generation of neuronal polarity formation and axon growth. Implicated in the formation of a single axon by developing neurons. May inhibit the formation of additional axons by inhibition of PI3K in minor neuronal processes. Plays a role in the formation of F-actin-enriched protrusive structures at the cell periphery. Plays a role in cytoskeletal organization by regulating the subcellular localization of FSCN1 and DBN1 at axonal growth cones. The sequence is that of Protein RUFY3 from Pongo abelii (Sumatran orangutan).